A 523-amino-acid chain; its full sequence is Solute carrier family 35 member F5 (523 aa).

The next 2 helical transmembrane spans lie at 69–89 (MALG…SSEL) and 101–121 (FFST…FIIW). Position 207 is a phosphoserine (serine 207). 8 helical membrane-spanning segments follow: residues 243-263 (ISFF…EALS), 268-288 (AIVN…AAVF), 296-316 (FTLS…LVNL), 327-347 (TIGS…IVMI), 361-381 (MFFG…FFLL), 395-415 (VVLM…EFLW), 420-440 (FLTS…LSII), and 452-472 (WLFF…TLLC). The region spanning 252–316 (FLANLSYQEA…SIGGVVLVNL (65 aa)) is the EamA domain.

This sequence belongs to the SLC35F solute transporter family.

It is found in the membrane. Its function is as follows. Putative solute transporter. This Pongo abelii (Sumatran orangutan) protein is Solute carrier family 35 member F5 (SLC35F5).